Here is a 76-residue protein sequence, read N- to C-terminus: Conotoxin Vc6.3 (76 aa).

Positions 1 to 22 are cleaved as a signal peptide; the sequence is MKLTCVMIVAVLFLTANTFATA. A propeptide spanning residues 23–50 is cleaved from the precursor; that stretch reads DDPRNGLRDLFSIAHHEMKNPEASKLNE. 3 disulfides stabilise this stretch: cysteine 52/cysteine 66, cysteine 59/cysteine 70, and cysteine 67/cysteine 75.

Belongs to the conotoxin O1 superfamily. As to expression, expressed by the venom duct.

It is found in the secreted. This is Conotoxin Vc6.3 from Conus victoriae (Queen Victoria cone).